We begin with the raw amino-acid sequence, 166 residues long: Large ribosomal subunit protein uL10 (166 aa).

Belongs to the universal ribosomal protein uL10 family. In terms of assembly, part of the ribosomal stalk of the 50S ribosomal subunit. The N-terminus interacts with L11 and the large rRNA to form the base of the stalk. The C-terminus forms an elongated spine to which L12 dimers bind in a sequential fashion forming a multimeric L10(L12)X complex.

Forms part of the ribosomal stalk, playing a central role in the interaction of the ribosome with GTP-bound translation factors. This is Large ribosomal subunit protein uL10 from Pseudomonas entomophila (strain L48).